A 226-amino-acid chain; its full sequence is MGTWILFACLLGTAFAMPLPPHPGHPGYINFSYEKSHSNAINIDRTALVLTPLKWYQSMIRQPYPSYGYESMGGWVHHQVIPVLSQQHPPSHTTLPPHHHIPVGPAQQPVVPQQPLMPVPGHHSMTPNQHHQPNLPPTSQQPFQQPFPTQPVQPQHHQPIQPIQPIQPIQPIQPIQPQSPLHPIQPLPPQQALPPMFSMQPIAPLLPDLPLEAWPATDKTKREEVD.

Positions 1-16 are cleaved as a signal peptide; sequence MGTWILFACLLGTAFA. The residue at position 32 (serine 32) is a Phosphoserine. Residues 86–196 are disordered; sequence QQHPPSHTTL…LPPQQALPPM (111 aa). Low complexity-rich tracts occupy residues 88–120 and 137–182; these read HPPS…MPVP and PTSQ…SPLH. Residues 183 to 192 are compositionally biased toward pro residues; sequence PIQPLPPQQA.

It belongs to the amelogenin family.

Its subcellular location is the secreted. The protein resides in the extracellular space. It is found in the extracellular matrix. Its function is as follows. Plays a role in the biomineralization of teeth. Seems to regulate the formation of crystallites during the secretory stage of tooth enamel development. Thought to play a major role in the structural organization and mineralization of developing enamel. This chain is Amelogenin (AMEL), found in Cavia porcellus (Guinea pig).